The following is a 336-amino-acid chain: Aspartate--ammonia ligase (336 aa).

The protein belongs to the class-II aminoacyl-tRNA synthetase family. AsnA subfamily.

It is found in the cytoplasm. It carries out the reaction L-aspartate + NH4(+) + ATP = L-asparagine + AMP + diphosphate + H(+). It functions in the pathway amino-acid biosynthesis; L-asparagine biosynthesis; L-asparagine from L-aspartate (ammonia route): step 1/1. The chain is Aspartate--ammonia ligase from Lactobacillus acidophilus (strain ATCC 700396 / NCK56 / N2 / NCFM).